The chain runs to 125 residues: Mediator of RNA polymerase II transcription subunit 11 (125 aa).

The protein belongs to the Mediator complex subunit 11 family. In terms of assembly, component of the Mediator complex.

It localises to the nucleus. Functionally, component of the Mediator complex, a coactivator involved in the regulated transcription of nearly all RNA polymerase II-dependent genes. Mediator functions as a bridge to convey information from gene-specific regulatory proteins to the basal RNA polymerase II transcription machinery. Mediator is recruited to promoters by direct interactions with regulatory proteins and serves as a scaffold for the assembly of a functional pre-initiation complex with RNA polymerase II and the general transcription factors. The sequence is that of Mediator of RNA polymerase II transcription subunit 11 (MED11) from Candida glabrata (strain ATCC 2001 / BCRC 20586 / JCM 3761 / NBRC 0622 / NRRL Y-65 / CBS 138) (Yeast).